Here is a 156-residue protein sequence, read N- to C-terminus: Transcriptional repressor NrdR (156 aa).

A zinc finger spans residues 3–34 (CPKCNSTHSRVVDSRHADEVNAIRRRRECEEC). One can recognise an ATP-cone domain in the interval 49–139 (LIVVKKDGTR…VYKEFKDVDQ (91 aa)).

It belongs to the NrdR family. Zn(2+) is required as a cofactor.

In terms of biological role, negatively regulates transcription of bacterial ribonucleotide reductase nrd genes and operons by binding to NrdR-boxes. The chain is Transcriptional repressor NrdR from Staphylococcus saprophyticus subsp. saprophyticus (strain ATCC 15305 / DSM 20229 / NCIMB 8711 / NCTC 7292 / S-41).